The chain runs to 1178 residues: Zinc finger CCHC domain-containing protein 2 (1178 aa).

Disordered regions lie at residues 1–90, 207–249, 557–683, and 936–986; these read MLRM…GPSA, AARG…RVGG, VTSA…SVNQ, and LSTA…SDST. Residues 43–67 are compositionally biased toward pro residues; that stretch reads PPPPPPPPAGPSRGPLPPPPPPRGL. Gly residues predominate over residues 75–88; sequence AAAGAGMPGGGGGP. The segment covering 208–219 has biased composition (basic and acidic residues); sequence ARGEGSRGGAED. Residues 220–229 show a composition bias toward acidic residues; sequence ERGEDGDGEQ. Ser-236 is subject to Phosphoserine. Over residues 580 to 594 the composition is skewed to basic and acidic residues; the sequence is PQTEKEKIKKTDNRL. Positions 595–607 are enriched in polar residues; sequence NSRINGIRLSTPQ. A compositionally biased stretch (low complexity) spans 632 to 641; the sequence is SSESYSSPSS. A compositionally biased stretch (basic and acidic residues) spans 642 to 661; sequence PRHDGRESFESEEEKDRDTD. Residues 665-683 show a composition bias toward polar residues; it reads EDSGNPSTTRFTGYGSVNQ. Positions 937–948 are enriched in low complexity; that stretch reads STAATSPQPASA. The span at 959–973 shows a compositional bias: pro residues; sequence PAVPTHTPGPAPSPS. Over residues 974–986 the composition is skewed to polar residues; sequence PALTHSTAQSDST. The CCHC-type zinc-finger motif lies at 1131-1148; it reads VSCYNCGVSGHYAQDCKQ.

The protein is Zinc finger CCHC domain-containing protein 2 of Homo sapiens (Human).